A 287-amino-acid chain; its full sequence is Nucleoid occlusion protein (287 aa).

The segment at residues 146 to 165 is a DNA-binding region (H-T-H motif); the sequence is EALAQRVGKSQSAIANKMRL.

The protein belongs to the ParB family.

The protein resides in the cytoplasm. It localises to the nucleoid. In terms of biological role, effects nucleoid occlusion by binding relatively nonspecifically to DNA and preventing the assembly of the division machinery in the vicinity of the nucleoid, especially under conditions that disturb the cell cycle. It helps to coordinate cell division and chromosome segregation by preventing the formation of the Z ring through the nucleoid, which would cause chromosome breakage. This is Nucleoid occlusion protein from Listeria monocytogenes serotype 4a (strain HCC23).